Consider the following 121-residue polypeptide: Large ribosomal subunit protein bL12 (121 aa).

It belongs to the bacterial ribosomal protein bL12 family. As to quaternary structure, homodimer. Part of the ribosomal stalk of the 50S ribosomal subunit. Forms a multimeric L10(L12)X complex, where L10 forms an elongated spine to which 2 to 4 L12 dimers bind in a sequential fashion. Binds GTP-bound translation factors.

Functionally, forms part of the ribosomal stalk which helps the ribosome interact with GTP-bound translation factors. Is thus essential for accurate translation. This Shewanella pealeana (strain ATCC 700345 / ANG-SQ1) protein is Large ribosomal subunit protein bL12.